Reading from the N-terminus, the 479-residue chain is uncharacterized protein (479 aa).

ATP-binding positions include 150–158 (TSGSTGKPK), D360, R375, and K462.

Belongs to the ATP-dependent AMP-binding enzyme family.

Functionally, may be involved in fatty acid metabolism. This is an uncharacterized protein from Bacillus subtilis (strain 168).